Consider the following 474-residue polypeptide: tRNA-2-methylthio-N(6)-dimethylallyladenosine synthase (474 aa).

The region spanning 3–120 (KKLHIKTWGC…LPEMIDQIRD (118 aa)) is the MTTase N-terminal domain. 6 residues coordinate [4Fe-4S] cluster: cysteine 12, cysteine 49, cysteine 83, cysteine 157, cysteine 161, and cysteine 164. Residues 143–375 (RADGPSAFVS…QDRITQQAMR (233 aa)) enclose the Radical SAM core domain. Positions 378 to 441 (RQMLGTVQRI…TNSLRGTFVR (64 aa)) constitute a TRAM domain.

The protein belongs to the methylthiotransferase family. MiaB subfamily. Monomer. It depends on [4Fe-4S] cluster as a cofactor.

The protein resides in the cytoplasm. It catalyses the reaction N(6)-dimethylallyladenosine(37) in tRNA + (sulfur carrier)-SH + AH2 + 2 S-adenosyl-L-methionine = 2-methylsulfanyl-N(6)-dimethylallyladenosine(37) in tRNA + (sulfur carrier)-H + 5'-deoxyadenosine + L-methionine + A + S-adenosyl-L-homocysteine + 2 H(+). Its function is as follows. Catalyzes the methylthiolation of N6-(dimethylallyl)adenosine (i(6)A), leading to the formation of 2-methylthio-N6-(dimethylallyl)adenosine (ms(2)i(6)A) at position 37 in tRNAs that read codons beginning with uridine. The protein is tRNA-2-methylthio-N(6)-dimethylallyladenosine synthase of Shewanella sediminis (strain HAW-EB3).